A 235-amino-acid polypeptide reads, in one-letter code: Large ribosomal subunit protein uL1 (235 aa).

This sequence belongs to the universal ribosomal protein uL1 family. As to quaternary structure, part of the 50S ribosomal subunit.

Functionally, binds directly to 23S rRNA. The L1 stalk is quite mobile in the ribosome, and is involved in E site tRNA release. In terms of biological role, protein L1 is also a translational repressor protein, it controls the translation of the L11 operon by binding to its mRNA. This chain is Large ribosomal subunit protein uL1, found in Fusobacterium nucleatum subsp. nucleatum (strain ATCC 25586 / DSM 15643 / BCRC 10681 / CIP 101130 / JCM 8532 / KCTC 2640 / LMG 13131 / VPI 4355).